The following is a 126-amino-acid chain: Glycine cleavage system H protein (126 aa).

A Lipoyl-binding domain is found at Thr-24 to Lys-105. Lys-65 bears the N6-lipoyllysine mark.

Belongs to the GcvH family. The glycine cleavage system is composed of four proteins: P, T, L and H. Requires (R)-lipoate as cofactor.

Functionally, the glycine cleavage system catalyzes the degradation of glycine. The H protein shuttles the methylamine group of glycine from the P protein to the T protein. The protein is Glycine cleavage system H protein of Burkholderia ambifaria (strain MC40-6).